A 286-amino-acid chain; its full sequence is Bifunctional protein FolD (286 aa).

NADP(+)-binding positions include 164-166 (GRS), Ser193, and Ile234.

This sequence belongs to the tetrahydrofolate dehydrogenase/cyclohydrolase family. As to quaternary structure, homodimer.

It catalyses the reaction (6R)-5,10-methylene-5,6,7,8-tetrahydrofolate + NADP(+) = (6R)-5,10-methenyltetrahydrofolate + NADPH. It carries out the reaction (6R)-5,10-methenyltetrahydrofolate + H2O = (6R)-10-formyltetrahydrofolate + H(+). It functions in the pathway one-carbon metabolism; tetrahydrofolate interconversion. In terms of biological role, catalyzes the oxidation of 5,10-methylenetetrahydrofolate to 5,10-methenyltetrahydrofolate and then the hydrolysis of 5,10-methenyltetrahydrofolate to 10-formyltetrahydrofolate. The protein is Bifunctional protein FolD of Maridesulfovibrio salexigens (strain ATCC 14822 / DSM 2638 / NCIMB 8403 / VKM B-1763) (Desulfovibrio salexigens).